The sequence spans 302 residues: tRNA-cytidine(32) 2-sulfurtransferase (302 aa).

The short motif at 45 to 50 is the PP-loop motif element; it reads SGGKDS. Cys-120, Cys-123, and Cys-211 together coordinate [4Fe-4S] cluster.

It belongs to the TtcA family. As to quaternary structure, homodimer. The cofactor is Mg(2+). Requires [4Fe-4S] cluster as cofactor.

The protein resides in the cytoplasm. The enzyme catalyses cytidine(32) in tRNA + S-sulfanyl-L-cysteinyl-[cysteine desulfurase] + AH2 + ATP = 2-thiocytidine(32) in tRNA + L-cysteinyl-[cysteine desulfurase] + A + AMP + diphosphate + H(+). The protein operates within tRNA modification. Functionally, catalyzes the ATP-dependent 2-thiolation of cytidine in position 32 of tRNA, to form 2-thiocytidine (s(2)C32). The sulfur atoms are provided by the cysteine/cysteine desulfurase (IscS) system. The chain is tRNA-cytidine(32) 2-sulfurtransferase from Aeromonas salmonicida (strain A449).